The following is a 144-amino-acid chain: Small ribosomal subunit protein eS19A (144 aa).

The protein belongs to the eukaryotic ribosomal protein eS19 family. As to quaternary structure, component of the small ribosomal subunit (SSU). Mature yeast ribosomes consist of a small (40S) and a large (60S) subunit. The 40S small subunit contains 1 molecule of ribosomal RNA (18S rRNA) and 33 different proteins (encoded by 57 genes). The large 60S subunit contains 3 rRNA molecules (25S, 5.8S and 5S rRNA) and 46 different proteins (encoded by 81 genes).

Its subcellular location is the cytoplasm. In terms of biological role, component of the ribosome, a large ribonucleoprotein complex responsible for the synthesis of proteins in the cell. The small ribosomal subunit (SSU) binds messenger RNAs (mRNAs) and translates the encoded message by selecting cognate aminoacyl-transfer RNA (tRNA) molecules. The large subunit (LSU) contains the ribosomal catalytic site termed the peptidyl transferase center (PTC), which catalyzes the formation of peptide bonds, thereby polymerizing the amino acids delivered by tRNAs into a polypeptide chain. The nascent polypeptides leave the ribosome through a tunnel in the LSU and interact with protein factors that function in enzymatic processing, targeting, and the membrane insertion of nascent chains at the exit of the ribosomal tunnel. eS19 is required for proper maturation of the small (40S) ribosomal subunit. Binds to 40S pre-ribosomal particles, probably required after association of NOC4 but before association of ENP1, TSR1 and RIO2 with 20/21S pre-rRNA. The sequence is that of Small ribosomal subunit protein eS19A from Saccharomyces cerevisiae (strain ATCC 204508 / S288c) (Baker's yeast).